The primary structure comprises 468 residues: 6-phospho-beta-galactosidase (468 aa).

5 residues coordinate D-galactose 6-phosphate: Gln19, His116, Asn159, Glu160, and Asn297. Residue Glu160 is the Proton donor of the active site. Catalysis depends on Glu375, which acts as the Nucleophile. D-galactose 6-phosphate-binding residues include Ser428, Trp429, Lys435, and Tyr437.

It belongs to the glycosyl hydrolase 1 family.

It carries out the reaction a 6-phospho-beta-D-galactoside + H2O = D-galactose 6-phosphate + an alcohol. The protein operates within carbohydrate metabolism; lactose degradation; D-galactose 6-phosphate and beta-D-glucose from lactose 6-phosphate: step 1/1. This chain is 6-phospho-beta-galactosidase, found in Streptococcus sanguinis (strain SK36).